A 699-amino-acid polypeptide reads, in one-letter code: Glutamine--fructose-6-phosphate aminotransferase [isomerizing] (699 aa).

Cys-2 (nucleophile) is an active-site residue. A Glutamine amidotransferase type-2 domain is found at Cys-2–Gly-303. SIS domains are found at residues His-377–Val-516 and Ser-544–Pro-689.

It carries out the reaction D-fructose 6-phosphate + L-glutamine = D-glucosamine 6-phosphate + L-glutamate. Its pathway is nucleotide-sugar biosynthesis; UDP-N-acetyl-alpha-D-glucosamine biosynthesis; alpha-D-glucosamine 6-phosphate from D-fructose 6-phosphate: step 1/1. Functionally, involved in amino sugar synthesis (formation of chitin, supplies the amino sugars of asparagine-linked oligosaccharides of glycoproteins). The sequence is that of Glutamine--fructose-6-phosphate aminotransferase [isomerizing] (GFA1) from Encephalitozoon cuniculi (strain GB-M1) (Microsporidian parasite).